Consider the following 742-residue polypeptide: Zinc transporter ZIP6 (742 aa).

The Extracellular portion of the chain corresponds to 1-353; the sequence is MMTFLCTRSG…QRNTPVYIAW (353 aa). N94 and N127 each carry an N-linked (GlcNAc...) asparagine glycan. Disordered stretches follow at residues 148 to 182 and 191 to 210; these read PVTT…SQSD and MNQE…RSRR. Residues 152-165 are compositionally biased toward basic and acidic residues; the sequence is KKGDMDHSVEKSDP. Over residues 192 to 206 the composition is skewed to polar residues; that stretch reads NQESTTALTTPSYVT. 3 N-linked (GlcNAc...) asparagine glycosylation sites follow: N212, N232, and N237. The interval 220 to 260 is disordered; sequence TQDHASFSPSQPNVTHSNHTHHDEDTPTHQHDDHDEHEHAR. Residues 222-236 are compositionally biased toward polar residues; the sequence is DHASFSPSQPNVTHS. A compositionally biased stretch (basic and acidic residues) spans 239–260; the sequence is THHDEDTPTHQHDDHDEHEHAR. N267 and N337 each carry an N-linked (GlcNAc...) asparagine glycan. The disordered stretch occupies residues 310–342; that stretch reads EDEHSDHSHHHKHHHHHHDHQHLQHPHNHTNGR. The span at 316–339 shows a compositional bias: basic residues; that stretch reads HSHHHKHHHHHHDHQHLQHPHNHT. A helical transmembrane segment spans residues 354–374; that stretch reads LGGFLSITLISLLALVGVVLI. Residues 375–385 are Cytoplasmic-facing; the sequence is PLMNRVCFNFL. The chain crosses the membrane as a helical span at residues 386–406; that stretch reads LSFLVALAVGTLSGDALLHLI. At 407-430 the chain is on the extracellular side; the sequence is PHSQGHHHHGHSEEHAEEEDSLRP. Residues 431-451 form a helical membrane-spanning segment; that stretch reads VWTGLTALSGVYIMFLIEHFL. Topologically, residues 452–644 are cytoplasmic; the sequence is TLGKMYKDKN…LKAGMSVRQA (193 aa). Residues 645–665 form a helical membrane-spanning segment; that stretch reads MLYNLLSALMGYLGMIIGILI. Over 666–671 the chain is Extracellular; the sequence is GHYAEN. Residues 672 to 692 form a helical membrane-spanning segment; sequence VATWIFALTAGLFMYVALVDM. The Cytoplasmic portion of the chain corresponds to 693–710; it reads VPEMLHNDASEAGFSHYG. A helical membrane pass occupies residues 711–731; sequence FFLLQNAGILLGFGIMLIIAV. Residues 732 to 742 are Extracellular-facing; that stretch reads FEDRIQLDLGY.

The protein belongs to the ZIP transporter (TC 2.A.5) family. In terms of processing, cleaved on the N-terminus before locating to the plasma membrane. N-glycosylated.

The protein localises to the cell membrane. It catalyses the reaction Zn(2+)(in) = Zn(2+)(out). In terms of biological role, acts as a zinc-influx transporter which plays a role in zinc homeostasis and in the induction of epithelial-to-mesenchymal transition (EMT). This chain is Zinc transporter ZIP6, found in Danio rerio (Zebrafish).